The primary structure comprises 122 residues: Large ribosomal subunit protein bL12 (122 aa).

Belongs to the bacterial ribosomal protein bL12 family. Homodimer. Part of the ribosomal stalk of the 50S ribosomal subunit. Forms a multimeric L10(L12)X complex, where L10 forms an elongated spine to which 2 to 4 L12 dimers bind in a sequential fashion. Binds GTP-bound translation factors.

Its function is as follows. Forms part of the ribosomal stalk which helps the ribosome interact with GTP-bound translation factors. Is thus essential for accurate translation. The protein is Large ribosomal subunit protein bL12 of Xanthomonas oryzae pv. oryzae (strain MAFF 311018).